The chain runs to 320 residues: MLYRRNPQLNKNGELIHLLSTEGLSKAILTQILDTAANFVSVSSREVKKVPLLRGKSVFNLFFENSTRTRTTFEIAATRLSADVINLDIARSSASKGESLLDTIANLSAMAADLFVVRHGESGAPYLIAQHVAPHVHVVNAGDGRHAHPTQGLLDMYTIRHYKKDFSNLTVAIVGDVLHSRVARSDIHALTTLGCAEVRVVGPKTLVPADMAQMGVRVCNTLEEGIRGADVIIMLRLQNERMTGALLPSSQEFSKSFGLTTDKLQLARPDAIVMHPGPINRGVEIDSAVVDGVQSVILPQVTFGIAVRMAVMSIVAGNEA.

Carbamoyl phosphate-binding residues include R68 and T69. Position 96 (K96) interacts with L-aspartate. Residues R118, H148, and Q151 each contribute to the carbamoyl phosphate site. Positions 181 and 236 each coordinate L-aspartate. Carbamoyl phosphate contacts are provided by G277 and P278.

This sequence belongs to the aspartate/ornithine carbamoyltransferase superfamily. ATCase family. Heterododecamer (2C3:3R2) of six catalytic PyrB chains organized as two trimers (C3), and six regulatory PyrI chains organized as three dimers (R2).

The enzyme catalyses carbamoyl phosphate + L-aspartate = N-carbamoyl-L-aspartate + phosphate + H(+). It participates in pyrimidine metabolism; UMP biosynthesis via de novo pathway; (S)-dihydroorotate from bicarbonate: step 2/3. In terms of biological role, catalyzes the condensation of carbamoyl phosphate and aspartate to form carbamoyl aspartate and inorganic phosphate, the committed step in the de novo pyrimidine nucleotide biosynthesis pathway. The protein is Aspartate carbamoyltransferase catalytic subunit of Polaromonas naphthalenivorans (strain CJ2).